The following is a 301-amino-acid chain: tRNA dimethylallyltransferase (301 aa).

Position 10–17 (10–17 (GATATGKT)) interacts with ATP. Residue 12-17 (TATGKT) coordinates substrate. Positions 35–38 (DSRQ) are interaction with substrate tRNA.

The protein belongs to the IPP transferase family. In terms of assembly, monomer. Mg(2+) is required as a cofactor.

It catalyses the reaction adenosine(37) in tRNA + dimethylallyl diphosphate = N(6)-dimethylallyladenosine(37) in tRNA + diphosphate. Functionally, catalyzes the transfer of a dimethylallyl group onto the adenine at position 37 in tRNAs that read codons beginning with uridine, leading to the formation of N6-(dimethylallyl)adenosine (i(6)A). The polypeptide is tRNA dimethylallyltransferase (Crocosphaera subtropica (strain ATCC 51142 / BH68) (Cyanothece sp. (strain ATCC 51142))).